We begin with the raw amino-acid sequence, 561 residues long: Urocanate hydratase (561 aa).

Residues 52–53 (GG), Gln-130, 176–178 (GMG), Glu-196, Arg-201, 242–243 (NA), 267–271 (QTSAH), 277–278 (YL), and Tyr-326 each bind NAD(+). Cys-414 is an active-site residue. Gly-496 contacts NAD(+).

Belongs to the urocanase family. NAD(+) is required as a cofactor.

The protein localises to the cytoplasm. It catalyses the reaction 4-imidazolone-5-propanoate = trans-urocanate + H2O. The protein operates within amino-acid degradation; L-histidine degradation into L-glutamate; N-formimidoyl-L-glutamate from L-histidine: step 2/3. Functionally, catalyzes the conversion of urocanate to 4-imidazolone-5-propionate. This Rhizobium rhizogenes (strain K84 / ATCC BAA-868) (Agrobacterium radiobacter) protein is Urocanate hydratase.